The chain runs to 185 residues: ATP-dependent protease subunit HslV (185 aa).

T2 is a catalytic residue. 3 residues coordinate Na(+): G157, C160, and T163.

This sequence belongs to the peptidase T1B family. HslV subfamily. As to quaternary structure, a double ring-shaped homohexamer of HslV is capped on each side by a ring-shaped HslU homohexamer. The assembly of the HslU/HslV complex is dependent on binding of ATP.

The protein resides in the cytoplasm. The enzyme catalyses ATP-dependent cleavage of peptide bonds with broad specificity.. With respect to regulation, allosterically activated by HslU binding. Its function is as follows. Protease subunit of a proteasome-like degradation complex believed to be a general protein degrading machinery. The polypeptide is ATP-dependent protease subunit HslV (Idiomarina loihiensis (strain ATCC BAA-735 / DSM 15497 / L2-TR)).